Reading from the N-terminus, the 92-residue chain is Large ribosomal subunit protein eL31 (92 aa).

N-acetylserine is present on Ser-2.

This sequence belongs to the eukaryotic ribosomal protein eL31 family. As to quaternary structure, part of the 50S ribosomal subunit.

In terms of biological role, binds to the 23S rRNA. Located at the polypeptide exit tunnel on the outside of the subunit. This is Large ribosomal subunit protein eL31 (rpl31e) from Haloarcula marismortui (strain ATCC 43049 / DSM 3752 / JCM 8966 / VKM B-1809) (Halobacterium marismortui).